A 406-amino-acid polypeptide reads, in one-letter code: Dual-specificity RNA methyltransferase RlmN (406 aa).

The active-site Proton acceptor is Glu-119. One can recognise a Radical SAM core domain in the interval 125-370 (DKGRGTLCVS…AMVRRTRGDD (246 aa)). Cys-132 and Cys-375 are disulfide-bonded. Positions 139, 143, and 146 each coordinate [4Fe-4S] cluster. S-adenosyl-L-methionine is bound by residues 192-193 (GE), Ser-224, 246-248 (SLH), and Asn-332. The S-methylcysteine intermediate role is filled by Cys-375.

Belongs to the radical SAM superfamily. RlmN family. Requires [4Fe-4S] cluster as cofactor.

Its subcellular location is the cytoplasm. The catalysed reaction is adenosine(2503) in 23S rRNA + 2 reduced [2Fe-2S]-[ferredoxin] + 2 S-adenosyl-L-methionine = 2-methyladenosine(2503) in 23S rRNA + 5'-deoxyadenosine + L-methionine + 2 oxidized [2Fe-2S]-[ferredoxin] + S-adenosyl-L-homocysteine. The enzyme catalyses adenosine(37) in tRNA + 2 reduced [2Fe-2S]-[ferredoxin] + 2 S-adenosyl-L-methionine = 2-methyladenosine(37) in tRNA + 5'-deoxyadenosine + L-methionine + 2 oxidized [2Fe-2S]-[ferredoxin] + S-adenosyl-L-homocysteine. Its function is as follows. Specifically methylates position 2 of adenine 2503 in 23S rRNA and position 2 of adenine 37 in tRNAs. m2A2503 modification seems to play a crucial role in the proofreading step occurring at the peptidyl transferase center and thus would serve to optimize ribosomal fidelity. This is Dual-specificity RNA methyltransferase RlmN from Xylella fastidiosa (strain 9a5c).